A 567-amino-acid polypeptide reads, in one-letter code: Proton-coupled zinc antiporter SLC30A9, mitochondrial (567 aa).

A run of 5 helical transmembrane segments spans residues 238 to 258 (VVMVAICINGLNCFFKFLAWI), 313 to 333 (GVGIFMMGAGLSWYHGIMGLL), 341 to 361 (LLWAYCILAGSLVSEGATLLV), 391 to 411 (VILLEDTAAVLGVIIAATCMG), and 423 to 443 (SLGSLGVGTLLGVVSAFLIYT). The short motif at 461–465 (LTELL) is the LXXLL motif element.

The protein belongs to the cation diffusion facilitator (CDF) transporter (TC 2.A.4) family. SLC30A subfamily. In terms of assembly, interacts with GRIP1, ESR1, AR and CTNNB1.

It is found in the mitochondrion membrane. The protein resides in the nucleus. Its subcellular location is the endoplasmic reticulum. The catalysed reaction is Zn(2+)(in) + 2 H(+)(out) = Zn(2+)(out) + 2 H(+)(in). Functionally, acts as a zinc transporter involved in intracellular zinc homeostasis. Functions as a secondary coactivator for nuclear receptors by cooperating with p160 coactivators subtypes. Plays a role in transcriptional activation of Wnt-responsive genes. Mitochondrial proton-coupled zinc ion antiporter mediating the export of zinc from the mitochondria and involved in zinc homeostasis, zinc mobilization as well as mitochondrial morphology and health. In nucleus, functions as a secondary coactivator for nuclear receptors by cooperating with p160 coactivators subtypes. Plays a role in transcriptional activation of Wnt-responsive genes. The polypeptide is Proton-coupled zinc antiporter SLC30A9, mitochondrial (Slc30a9) (Mus musculus (Mouse)).